Here is a 755-residue protein sequence, read N- to C-terminus: Catalase-peroxidase (755 aa).

The tryptophyl-tyrosyl-methioninium (Trp-Tyr) (with M-267) cross-link spans 93-241; that stretch reads WHSAGTYRVF…LAAAHMGLIY (149 aa). Histidine 94 serves as the catalytic Proton acceptor. The tryptophyl-tyrosyl-methioninium (Tyr-Met) (with W-93) cross-link spans 241–267; that stretch reads YVNPEGPDGNPDPVAAARDIRVTFGRM. A heme b-binding site is contributed by histidine 282.

The protein belongs to the peroxidase family. Peroxidase/catalase subfamily. Homodimer or homotetramer. Requires heme b as cofactor. In terms of processing, formation of the three residue Trp-Tyr-Met cross-link is important for the catalase, but not the peroxidase activity of the enzyme.

The protein resides in the cytoplasm. It catalyses the reaction H2O2 + AH2 = A + 2 H2O. The catalysed reaction is 2 H2O2 = O2 + 2 H2O. Its function is as follows. Bifunctional enzyme with both catalase and broad-spectrum peroxidase activity. This chain is Catalase-peroxidase, found in Podospora anserina (strain S / ATCC MYA-4624 / DSM 980 / FGSC 10383) (Pleurage anserina).